We begin with the raw amino-acid sequence, 333 residues long: Flotillin-like protein FloA (333 aa).

The helical transmembrane segment at 10-30 threads the bilayer; sequence IFLIAGGIIFLVLFFHYVPFF.

Belongs to the flotillin-like FloA family. In terms of assembly, homooligomerizes.

It localises to the cell membrane. It is found in the membrane raft. Functionally, found in functional membrane microdomains (FMM) that may be equivalent to eukaryotic membrane rafts. FMMs are highly dynamic and increase in number as cells age. Flotillins are thought to be important factors in membrane fluidity. This Bacteroides fragilis (strain ATCC 25285 / DSM 2151 / CCUG 4856 / JCM 11019 / LMG 10263 / NCTC 9343 / Onslow / VPI 2553 / EN-2) protein is Flotillin-like protein FloA.